The primary structure comprises 199 residues: Fe/S biogenesis protein NfuA (199 aa).

[4Fe-4S] cluster-binding residues include C151 and C154.

This sequence belongs to the NfuA family. As to quaternary structure, homodimer. The cofactor is [4Fe-4S] cluster.

Its function is as follows. Involved in iron-sulfur cluster biogenesis. Binds a 4Fe-4S cluster, can transfer this cluster to apoproteins, and thereby intervenes in the maturation of Fe/S proteins. Could also act as a scaffold/chaperone for damaged Fe/S proteins. This chain is Fe/S biogenesis protein NfuA, found in Xanthomonas axonopodis pv. citri (strain 306).